The primary structure comprises 296 residues: Carboxylesterase YbfK (296 aa).

Residues serine 129, glutamate 244, and histidine 273 each act as charge relay system in the active site.

Belongs to the AB hydrolase superfamily.

The protein localises to the cytoplasm. It catalyses the reaction a carboxylic ester + H2O = an alcohol + a carboxylate + H(+). Its function is as follows. Shows carboxylesterase activity in vitro. In Bacillus subtilis (strain 168), this protein is Carboxylesterase YbfK (ybfK).